Here is a 330-residue protein sequence, read N- to C-terminus: MKKQFIQKQQQISLVKSFFSRQLEQQLGLIEVQAPILSRLGDGTQDNLSGSEKAVQVKVKTLPDATFEVVHSLAKWKRKTLGSYDFGAGEGLYTHMKALRPDEDRLSAIHSVYVDQWDWERVMGDGERSQDYLESTVRSIYAAIKATEGEVSREYGLTPFLPEQIHFVHSETLLQRYPELDAKGRERAIAKELGAVFLIGIGGKLSHGKSHDVRAPDYDDWTTPAAEGLAGLNGDILVWNPVLQDAFELSSMGIRVDASALKRQLAQTGDEDRLALEWHQSLLRGEMPQTIGGGIGQSRLVMLLLQLSHIGQVQCGVWSPQVREAVEGLL.

This sequence belongs to the class-II aminoacyl-tRNA synthetase family. AsnA subfamily.

The protein localises to the cytoplasm. The enzyme catalyses L-aspartate + NH4(+) + ATP = L-asparagine + AMP + diphosphate + H(+). Its pathway is amino-acid biosynthesis; L-asparagine biosynthesis; L-asparagine from L-aspartate (ammonia route): step 1/1. This Serratia proteamaculans (strain 568) protein is Aspartate--ammonia ligase.